Here is a 242-residue protein sequence, read N- to C-terminus: NLP effector protein 8 (242 aa).

Positions 1 to 17 (MHLTVFYLVALCTFASA) are cleaved as a signal peptide. Positions 108 to 118 (AIMYAWYFPRD) match the Conserved undecapeptide motif motif. Residues 127–133 (GHRNAWE) carry the Conserved heptapeptide motif motif. Residue asparagine 206 is glycosylated (N-linked (GlcNAc...) asparagine).

It belongs to the Necrosis inducing protein (NPP1) family.

The protein localises to the secreted. In terms of biological role, probable secreted effector that may act as a pathogen-associated molecular pattern (PAMP) recognized by the plant immune system. The protein is NLP effector protein 8 of Plasmopara viticola (Downy mildew of grapevine).